A 134-amino-acid chain; its full sequence is MVSQDFSREKRLLTPRHFKAVFDSPTGKVPGKNLLILARENGLDHPRLGLVIGKKSVKLAVQRNRLKRLMRDSFRLNQQLLAGLDIVIVARKGLGEIENPELHQHFGKLWKRLARSRPTPAVTANSAGVDSQDA.

Belongs to the RnpA family. As to quaternary structure, consists of a catalytic RNA component (M1 or rnpB) and a protein subunit.

It catalyses the reaction Endonucleolytic cleavage of RNA, removing 5'-extranucleotides from tRNA precursor.. In terms of biological role, RNaseP catalyzes the removal of the 5'-leader sequence from pre-tRNA to produce the mature 5'-terminus. It can also cleave other RNA substrates such as 4.5S RNA. The protein component plays an auxiliary but essential role in vivo by binding to the 5'-leader sequence and broadening the substrate specificity of the ribozyme. In Pseudomonas putida (strain ATCC 700007 / DSM 6899 / JCM 31910 / BCRC 17059 / LMG 24140 / F1), this protein is Ribonuclease P protein component.